The primary structure comprises 105 residues: Large ribosomal subunit protein eL30 (105 aa).

This sequence belongs to the eukaryotic ribosomal protein eL30 family.

The protein is Large ribosomal subunit protein eL30 (RPL30) of Eremothecium gossypii (strain ATCC 10895 / CBS 109.51 / FGSC 9923 / NRRL Y-1056) (Yeast).